A 1171-amino-acid polypeptide reads, in one-letter code: Structural maintenance of chromosomes protein 2-2 (1171 aa).

The Zinc-hook domain maps to 2 to 1158 (HIKEICLEGF…DVLFRTKFVD (1157 aa)). 32–39 (GLNGSGKS) provides a ligand contact to ATP. A coiled-coil region spans residues 172 to 510 (RMYENKKEAA…LANVQFTYRD (339 aa)). Positions 518–635 (SKVKGVVAKL…KTTDAAKEVA (118 aa)) constitute an SMC hinge domain. Residues 674-1026 (HDLAEAETKF…LDEKKKETLK (353 aa)) are a coiled coil.

The protein belongs to the SMC family. SMC2 subfamily. As to quaternary structure, forms a heterodimer with SMC4. Component of the condensin complex, which contains the SMC2 and SMC4 heterodimer, and three non SMC subunits that probably regulate the complex: CAPH, CAPD2 and CAPG. In terms of tissue distribution, highly expressed in roots and young floral buds.

The protein resides in the nucleus. Central component of the condensin complex, a complex required for conversion of interphase chromatin into mitotic-like condense chromosomes. The condensin complex probably introduces positive supercoils into relaxed DNA in the presence of type I topoisomerases and converts nicked DNA into positive knotted forms in the presence of type II topoisomerases. Also involved in chromosome segregation in meiosis. This is Structural maintenance of chromosomes protein 2-2 (SMC2-2) from Arabidopsis thaliana (Mouse-ear cress).